We begin with the raw amino-acid sequence, 443 residues long: Dynein regulatory complex protein 9 (443 aa).

Disordered regions lie at residues 1-40 and 415-443; these read MEED…LPKE and GFKM…GKKK. Positions 393–422 constitute an IQ domain; the sequence is ELKSVIKLQAWWRGTMIRREIGGFKMPKDK. Positions 415–430 are enriched in basic and acidic residues; that stretch reads GFKMPKDKVDSKDSKG. The span at 431–443 shows a compositional bias: basic residues; that stretch reads KGKGKDKRRGKKK.

Belongs to the DRC9 family. In terms of assembly, component of the nexin-dynein regulatory complex (N-DRC). Interacts (via IQ domain) with CALM when calcium levels are low. Does not interact with CALM in the presence of Ca(2+). Interacts with the HSP70 proteins HSPA1L and HSPA8. May form a complex with CAMK4 and HSP70.

Its subcellular location is the cytoplasm. The protein resides in the cell projection. It is found in the cilium. It localises to the flagellum. The protein localises to the cytoskeleton. Its subcellular location is the flagellum axoneme. In terms of biological role, component of the nexin-dynein regulatory complex (N-DRC), a key regulator of ciliary/flagellar motility which maintains the alignment and integrity of the distal axoneme and regulates microtubule sliding in motile axonemes. Binds calmodulin when cellular Ca(2+) levels are low and thereby contributes to the regulation of calcium and calmodulin-dependent protein kinase IV (CAMK4) activity; contributes to the regulation of CAMK4 signaling cascades. Required for normal axoneme assembly in sperm flagella, normal sperm tail formation and for male fertility. In Macaca fascicularis (Crab-eating macaque), this protein is Dynein regulatory complex protein 9 (IQCG).